A 277-amino-acid chain; its full sequence is Large ribosomal subunit protein uL2 (277 aa).

Disordered stretches follow at residues 24–55 (ITTS…RHHG) and 221–277 (RGSV…RKKK).

The protein belongs to the universal ribosomal protein uL2 family. Part of the 50S ribosomal subunit. Forms a bridge to the 30S subunit in the 70S ribosome.

Functionally, one of the primary rRNA binding proteins. Required for association of the 30S and 50S subunits to form the 70S ribosome, for tRNA binding and peptide bond formation. It has been suggested to have peptidyltransferase activity; this is somewhat controversial. Makes several contacts with the 16S rRNA in the 70S ribosome. The protein is Large ribosomal subunit protein uL2 of Listeria innocua serovar 6a (strain ATCC BAA-680 / CLIP 11262).